Reading from the N-terminus, the 178-residue chain is Large ribosomal subunit protein uL30 (178 aa).

This sequence belongs to the universal ribosomal protein uL30 family. As to quaternary structure, part of the 50S ribosomal subunit.

This is Large ribosomal subunit protein uL30 from Pyrobaculum aerophilum (strain ATCC 51768 / DSM 7523 / JCM 9630 / CIP 104966 / NBRC 100827 / IM2).